The primary structure comprises 177 residues: CASP-like protein 2U1 (177 aa).

A helical membrane pass occupies residues 1-21 (MVLRIVASLLSIAALVLMAKD). Residues 22 to 48 (KQVVYLNLAGEELTLEAKHSYVEAFVY) are Cytoplasmic-facing. A helical transmembrane segment spans residues 49-69 (LVYSNGLVAIYCFLLVFALVF). Residues 70-80 (RLIDKAGCGKS) are Extracellular-facing. A helical membrane pass occupies residues 81-101 (AAWIIFLLDQGLAYVLLAAAA). Residues 102–131 (ASTEVAYVAKRGNNKVGWSEVCSTFGHFCN) lie on the Cytoplasmic side of the membrane. A helical membrane pass occupies residues 132–152 (LVGVSIVITFISVLAMATLSV). The Extracellular portion of the chain corresponds to 153 to 177 (MSARRLFKTYGPERKQISSNDAPAI).

The protein belongs to the Casparian strip membrane proteins (CASP) family. Homodimer and heterodimers.

The protein localises to the cell membrane. This is CASP-like protein 2U1 from Osmunda lancea (Fern).